A 212-amino-acid polypeptide reads, in one-letter code: Ribonuclease HII (212 aa).

The region spanning 22–212 (ILIAGLDEAG…APLKGMIDGL (191 aa)) is the RNase H type-2 domain. A divalent metal cation is bound by residues Asp-28, Glu-29, and Asp-123.

The protein belongs to the RNase HII family. Mn(2+) serves as cofactor. The cofactor is Mg(2+).

It is found in the cytoplasm. It catalyses the reaction Endonucleolytic cleavage to 5'-phosphomonoester.. Functionally, endonuclease that specifically degrades the RNA of RNA-DNA hybrids. This is Ribonuclease HII from Dehalococcoides mccartyi (strain ATCC BAA-2100 / JCM 16839 / KCTC 5957 / BAV1).